The chain runs to 300 residues: ATP-dependent (S)-NAD(P)H-hydrate dehydratase (300 aa).

The region spanning 7 to 289 (IEARLKSIIP…ESIPSVFDQV (283 aa)) is the YjeF C-terminal domain. (6S)-NADPHX is bound by residues Gly107 and 160–166 (NVMEYRR). Residues 194–198 (KGQVD) and 213–222 (GSPRRCGGQG) contribute to the ATP site. Position 223 (Asp223) interacts with (6S)-NADPHX.

The protein belongs to the NnrD/CARKD family. Requires Mg(2+) as cofactor.

The catalysed reaction is (6S)-NADHX + ATP = ADP + phosphate + NADH + H(+). The enzyme catalyses (6S)-NADPHX + ATP = ADP + phosphate + NADPH + H(+). Its function is as follows. Catalyzes the dehydration of the S-form of NAD(P)HX at the expense of ATP, which is converted to ADP. Together with NAD(P)HX epimerase, which catalyzes the epimerization of the S- and R-forms, the enzyme allows the repair of both epimers of NAD(P)HX, a damaged form of NAD(P)H that is a result of enzymatic or heat-dependent hydration. The chain is ATP-dependent (S)-NAD(P)H-hydrate dehydratase from Entamoeba histolytica (strain ATCC 30459 / HM-1:IMSS / ABRM).